We begin with the raw amino-acid sequence, 142 residues long: Small heat shock protein IbpB (142 aa).

Residues 26–137 (TGESQSFPPY…APQRIAISER (112 aa)) form the sHSP domain.

Belongs to the small heat shock protein (HSP20) family. As to quaternary structure, homodimer. Forms homomultimers of about 100-150 subunits at optimal growth temperatures. Conformation changes to oligomers at high temperatures or high ionic concentrations. The decrease in size of the multimers is accompanied by an increase in chaperone activity.

It localises to the cytoplasm. Its function is as follows. Associates with aggregated proteins, together with IbpA, to stabilize and protect them from irreversible denaturation and extensive proteolysis during heat shock and oxidative stress. Aggregated proteins bound to the IbpAB complex are more efficiently refolded and reactivated by the ATP-dependent chaperone systems ClpB and DnaK/DnaJ/GrpE. Its activity is ATP-independent. The sequence is that of Small heat shock protein IbpB from Citrobacter koseri (strain ATCC BAA-895 / CDC 4225-83 / SGSC4696).